Here is a 179-residue protein sequence, read N- to C-terminus: ATP synthase subunit delta (179 aa).

This sequence belongs to the ATPase delta chain family. In terms of assembly, F-type ATPases have 2 components, F(1) - the catalytic core - and F(0) - the membrane proton channel. F(1) has five subunits: alpha(3), beta(3), gamma(1), delta(1), epsilon(1). F(0) has three main subunits: a(1), b(2) and c(10-14). The alpha and beta chains form an alternating ring which encloses part of the gamma chain. F(1) is attached to F(0) by a central stalk formed by the gamma and epsilon chains, while a peripheral stalk is formed by the delta and b chains.

It is found in the cell inner membrane. Its function is as follows. F(1)F(0) ATP synthase produces ATP from ADP in the presence of a proton or sodium gradient. F-type ATPases consist of two structural domains, F(1) containing the extramembraneous catalytic core and F(0) containing the membrane proton channel, linked together by a central stalk and a peripheral stalk. During catalysis, ATP synthesis in the catalytic domain of F(1) is coupled via a rotary mechanism of the central stalk subunits to proton translocation. In terms of biological role, this protein is part of the stalk that links CF(0) to CF(1). It either transmits conformational changes from CF(0) to CF(1) or is implicated in proton conduction. This is ATP synthase subunit delta from Acidithiobacillus ferrooxidans (strain ATCC 23270 / DSM 14882 / CIP 104768 / NCIMB 8455) (Ferrobacillus ferrooxidans (strain ATCC 23270)).